The sequence spans 2641 residues: Inverse autotransporter adhesin YeeJ (2641 aa).

The N-terminal stretch at 1–26 (MGIKLRRLTAGICLVTQLAFPMAAAA) is a signal peptide. Residues 50-98 (VPYILGALESAQSVAERFGISVAELRKLNQFRTFARGFDNVRQGDELDV) form the LysM domain. A disordered region spans residues 99–118 (PAQVSEKKLTPPPGNSSDNL). Residues 125–400 (TSQQIGSLLA…SRYDLVDRNN (276 aa)) are inverse autotransporter. The interval 513–605 (QKDSSVSLST…GVDAAKAPAV (93 aa)) is invasin 3 domain. 17 consecutive Big-1 domains span residues 617-711 (HSSI…AGFI), 721-815 (IATL…VSFV), 822-913 (QVDL…VNFI), 920-1017 (ALTL…MTFV), 1024-1116 (VVVL…VNIA), 1123-1220 (QVTL…VTFV), 1227-1319 (VVVL…VNIA), 1326-1423 (QVTL…VTFV), 1430-1523 (QVVL…VHFI), 1531-1633 (IIEL…SINV), 1641-1734 (HLTL…VTYV), 1741-1837 (EISL…VNFT), 1844-1941 (QVNL…VTLI), 1948-2032 (KLTS…PTEV), 2048-2139 (FTSL…LEAI), 2142-2236 (KLTL…VKVT), and 2244-2336 (VASF…ITLV). A C-type lectin domain region spans residues 2538 to 2641 (KSWWVNAGDA…FAHATCYKNL (104 aa)).

This sequence belongs to the intimin/invasin family.

Its subcellular location is the cell outer membrane. Functionally, a probable inverse autotransporter, it may be involved in biofilm formation and cell adhesion. May bind peptidoglycan via its LysM domain. Upon overexpression shows increased mature biofilm formation. This Escherichia coli O17:K52:H18 (strain UMN026 / ExPEC) protein is Inverse autotransporter adhesin YeeJ.